The following is a 466-amino-acid chain: Asparagine--tRNA ligase (466 aa).

This sequence belongs to the class-II aminoacyl-tRNA synthetase family. In terms of assembly, homodimer.

It is found in the cytoplasm. The enzyme catalyses tRNA(Asn) + L-asparagine + ATP = L-asparaginyl-tRNA(Asn) + AMP + diphosphate + H(+). The polypeptide is Asparagine--tRNA ligase (Idiomarina loihiensis (strain ATCC BAA-735 / DSM 15497 / L2-TR)).